Consider the following 276-residue polypeptide: Ribosomal RNA small subunit methyltransferase I (276 aa).

Belongs to the methyltransferase superfamily. RsmI family.

The protein resides in the cytoplasm. It catalyses the reaction cytidine(1402) in 16S rRNA + S-adenosyl-L-methionine = 2'-O-methylcytidine(1402) in 16S rRNA + S-adenosyl-L-homocysteine + H(+). Catalyzes the 2'-O-methylation of the ribose of cytidine 1402 (C1402) in 16S rRNA. In Mycoplasma pneumoniae (strain ATCC 29342 / M129 / Subtype 1) (Mycoplasmoides pneumoniae), this protein is Ribosomal RNA small subunit methyltransferase I.